Consider the following 905-residue polypeptide: Protein translocase subunit SecA (905 aa).

Residues glutamine 87, 105–109, and aspartate 512 contribute to the ATP site; that span reads GEGKT. Positions 840 to 905 are disordered; that stretch reads AQRQQEAMAQ…HCHGSKARYA (66 aa). The span at 843–852 shows a compositional bias: low complexity; sequence QQEAMAQAES. Residues 853–862 show a composition bias toward basic and acidic residues; sequence ENYRTADHQA. Over residues 863–874 the composition is skewed to polar residues; that stretch reads EAQQSESLTEEQ. Positions 886, 888, 897, and 898 each coordinate Zn(2+). The segment covering 892 to 905 has biased composition (basic residues); that stretch reads KKYKHCHGSKARYA.

Belongs to the SecA family. Monomer and homodimer. Part of the essential Sec protein translocation apparatus which comprises SecA, SecYEG and auxiliary proteins SecDF-YajC and YidC. The cofactor is Zn(2+).

Its subcellular location is the cell inner membrane. It is found in the cytoplasm. It catalyses the reaction ATP + H2O + cellular proteinSide 1 = ADP + phosphate + cellular proteinSide 2.. Its function is as follows. Part of the Sec protein translocase complex. Interacts with the SecYEG preprotein conducting channel. Has a central role in coupling the hydrolysis of ATP to the transfer of proteins into and across the cell membrane, serving both as a receptor for the preprotein-SecB complex and as an ATP-driven molecular motor driving the stepwise translocation of polypeptide chains across the membrane. The sequence is that of Protein translocase subunit SecA from Actinobacillus pleuropneumoniae serotype 3 (strain JL03).